The sequence spans 611 residues: Rho GTPase-activating protein gacN (611 aa).

Residues 24 to 219 (KTFKKILKPG…VLIEEFHVLY (196 aa)) enclose the Rho-GAP domain. A coiled-coil region spans residues 236–499 (IREDKRSTSE…TKLQKSSSSS (264 aa)). A compositionally biased stretch (basic and acidic residues) spans 476 to 491 (NQLEKEKSKLQDELTK). The disordered stretch occupies residues 476–550 (NQLEKEKSKL…TTPPPPLDED (75 aa)). Low complexity-rich tracts occupy residues 495–509 (SSSSSSSSSSSSSSS) and 527–540 (TTTTTTTTSPAQQP).

The protein resides in the cytoplasm. Its function is as follows. Rho GTPase-activating protein involved in the signal transduction pathway. This chain is Rho GTPase-activating protein gacN (gacN), found in Dictyostelium discoideum (Social amoeba).